A 325-amino-acid polypeptide reads, in one-letter code: uncharacterized protein (325 aa).

The transit peptide at 1 to 69 directs the protein to the chloroplast; the sequence is MAMMTTTTTT…KNRRVSVTVS (69 aa). Position 70 is an N-acetylalanine (alanine 70).

The protein belongs to the NAD(P)-dependent epimerase/dehydratase family.

The protein localises to the plastid. The protein resides in the chloroplast. This is an uncharacterized protein from Arabidopsis thaliana (Mouse-ear cress).